The sequence spans 493 residues: CBL-interacting protein kinase 26 (493 aa).

Residues 12–266 (YEIGRQLGQG…IPKIKRSAWY (255 aa)) form the Protein kinase domain. ATP-binding positions include 18-26 (LGQGNFAKV) and Lys-41. Asp-134 acts as the Proton acceptor in catalysis. Residues 152–181 (DFGLSALSESKRHDGLLHTTCGTPAYVAPE) form an activation loop region. The tract at residues 311 to 332 (KVYTNGEATTSDSPECSNSDGK) is disordered. The span at 316-332 (GEATTSDSPECSNSDGK) shows a compositional bias: polar residues. The NAF domain maps to 320–360 (TSDSPECSNSDGKQASLSLPNLNAFDIISLSTGFDLSNLFE). Residues 365–394 (RREERFTTRQPAAAIFAKLNELARRFKLKI) are PPI. Residues 465 to 493 (GQHQQPEQSMQGMQGEQQPSRLPSQQPQG) form a disordered region.

The protein belongs to the protein kinase superfamily. CAMK Ser/Thr protein kinase family. SNF1 subfamily. The cofactor is Mn(2+).

The catalysed reaction is L-seryl-[protein] + ATP = O-phospho-L-seryl-[protein] + ADP + H(+). It catalyses the reaction L-threonyl-[protein] + ATP = O-phospho-L-threonyl-[protein] + ADP + H(+). Its function is as follows. CIPK serine-threonine protein kinases interact with CBL proteins. Binding of a CBL protein to the regulatory NAF domain of CIPK protein lead to the activation of the kinase in a calcium-dependent manner. In Oryza sativa subsp. japonica (Rice), this protein is CBL-interacting protein kinase 26 (CIPK26).